Consider the following 217-residue polypeptide: MATPTPRHQETPQETTERERCEQWTDELFRTSPMVRFMTKHLSLLDCNPLSPLRTASSSSHATASARAQPKLVIAPCPPSIAGGFSPSLRSEPTSESSILLCSNRIFSKAHLEDTLSHEMVHWFDHCRFLVDWSNLRHHACSEIRAASLSGDCGFVREWQRRNYGFKLQHQNCVKRRAVLSILANPACAGDRQKAEQTVDEVFQSCFGDTRPFDEIY.

The interval 1 to 21 (MATPTPRHQETPQETTERERC) is disordered. A compositionally biased stretch (basic and acidic residues) spans 7–21 (RHQETPQETTERERC). Residue H118 coordinates a divalent metal cation. Residue E119 is part of the active site. An a divalent metal cation-binding site is contributed by H122.

This sequence belongs to the peptidase M76 family.

The protein localises to the mitochondrion inner membrane. In terms of biological role, has a dual role in the assembly of mitochondrial ATPase. Acts as a protease that removes N-terminal residues of mitochondrial ATPase CF(0) subunit 6 at the intermembrane space side. Also involved in the correct assembly of the membrane-embedded ATPase CF(0) particle, probably mediating association of subunit 6 with the subunit 9 ring. The protein is Mitochondrial inner membrane protease ATP23 (ATP23) of Mycosarcoma maydis (Corn smut fungus).